Here is a 298-residue protein sequence, read N- to C-terminus: Adaptation to cold protein C (298 aa).

As to quaternary structure, interacts with the C-terminal extension of AtcJ. Also interacts with AtcB, but not with AtcA.

With respect to regulation, interaction with AtcJ stabilizes AtcC. Functionally, involved in cold adaptation. The protein is Adaptation to cold protein C of Shewanella oneidensis (strain ATCC 700550 / JCM 31522 / CIP 106686 / LMG 19005 / NCIMB 14063 / MR-1).